Here is a 358-residue protein sequence, read N- to C-terminus: DNA polymerase IV (358 aa).

In terms of domain architecture, UmuC spans 4-185 (IIHIDMDCYF…LSLRKIPGVG (182 aa)). Residues D8 and D103 each contribute to the Mg(2+) site. E104 is a catalytic residue.

It belongs to the DNA polymerase type-Y family. As to quaternary structure, monomer. Mg(2+) serves as cofactor.

Its subcellular location is the cytoplasm. The enzyme catalyses DNA(n) + a 2'-deoxyribonucleoside 5'-triphosphate = DNA(n+1) + diphosphate. Poorly processive, error-prone DNA polymerase involved in untargeted mutagenesis. Copies undamaged DNA at stalled replication forks, which arise in vivo from mismatched or misaligned primer ends. These misaligned primers can be extended by PolIV. Exhibits no 3'-5' exonuclease (proofreading) activity. May be involved in translesional synthesis, in conjunction with the beta clamp from PolIII. The protein is DNA polymerase IV of Shewanella baltica (strain OS185).